The primary structure comprises 310 residues: Zinc finger protein 346 (310 aa).

Methionine 1 bears the N-acetylmethionine mark. Positions 1-12 (MEYPAPAAVQAA) are enriched in low complexity. The disordered stretch occupies residues 1 to 33 (MEYPAPAAVQAADGGGAGPYNSSELLEGQEPDG). A Matrin-type 1 zinc finger spans residues 70–104 (FTNTQCKVCCALLISESQKLAHYQSKKHANKVKRY). Zn(2+)-binding residues include cysteine 75, cysteine 78, histidine 91, and histidine 97. Residue lysine 114 forms a Glycyl lysine isopeptide (Lys-Gly) (interchain with G-Cter in SUMO2) linkage. The segment at 131-165 (DKNQCCPICNMTFSSPVVAQSHYLGKTHAKNLKLK) adopts a Matrin-type 2 zinc-finger fold. Residues cysteine 136, cysteine 139, histidine 152, and histidine 158 each contribute to the Zn(2+) site. Lysine 170 is covalently cross-linked (Glycyl lysine isopeptide (Lys-Gly) (interchain with G-Cter in SUMO2)). 2 consecutive Matrin-type zinc fingers follow at residues 198-232 (DPDK…ETKL) and 252-286 (GKGY…SPKT). Positions 278-310 (KHKNQSPKTVASSLGQIPMQRQPIQKDSTTLED) are disordered. 2 stretches are compositionally biased toward polar residues: residues 283–292 (SPKTVASSLG) and 299–310 (QPIQKDSTTLED).

In terms of assembly, forms a heteromeric complex with XPO5 and ILF3. Found in a nuclear export complex with XPO5, RAN, ILF3, ZNF346 and double-stranded RNA. Interacts with XPO5. Interacts with ILF3 in an RNA-independent manner.

The protein localises to the nucleus. It is found in the nucleolus. Its subcellular location is the cytoplasm. Its function is as follows. Binds with low affinity to dsDNA and ssRNA, and with high affinity to dsRNA, with no detectable sequence specificity. In Pongo abelii (Sumatran orangutan), this protein is Zinc finger protein 346 (ZNF346).